We begin with the raw amino-acid sequence, 1516 residues long: UDP-glucose:glycoprotein glucosyltransferase 2 (1516 aa).

The N-terminal stretch at 1–27 (MAPAKATNVVRLLLGSTALWLSQLGSG) is a signal peptide. N-linked (GlcNAc...) asparagine glycosylation is found at asparagine 256, asparagine 286, asparagine 920, and asparagine 950. Residues 1220-1516 (LHKENKKEKD…QDTILTHDEL (297 aa)) are glucosyltransferase. Tyrosine 1289 is subject to Phosphotyrosine. The Prevents secretion from ER motif lies at 1513-1516 (HDEL).

It belongs to the glycosyltransferase 8 family. Interacts with METTL23. Interacts with SELENOF. Ca(2+) is required as a cofactor. The cofactor is Mn(2+). As to expression, higher levels in kidney, pancreas, heart, and skeletal muscle.

The protein localises to the endoplasmic reticulum lumen. The protein resides in the endoplasmic reticulum-Golgi intermediate compartment. The enzyme catalyses N(4)-(alpha-D-Man-(1-&gt;2)-alpha-D-Man-(1-&gt;2)-alpha-D-Man-(1-&gt;3)-[alpha-D-Man-(1-&gt;2)-alpha-D-Man-(1-&gt;3)-[alpha-D-Man-(1-&gt;2)-alpha-D-Man-(1-&gt;6)]-alpha-D-Man-(1-&gt;6)]-beta-D-Man-(1-&gt;4)-beta-D-GlcNAc-(1-&gt;4)-beta-D-GlcNAc)-L-asparaginyl-[protein] (N-glucan mannose isomer 9A1,2,3B1,2,3) + UDP-alpha-D-glucose = N(4)-(alpha-D-Glc-(1-&gt;3)-alpha-D-Man-(1-&gt;2)-alpha-D-Man-(1-&gt;2)-alpha-D-Man-(1-&gt;3)-[alpha-D-Man-(1-&gt;2)-alpha-D-Man-(1-&gt;3)-[alpha-D-Man-(1-&gt;2)-alpha-D-Man-(1-&gt;6)]-alpha-D-Man-(1-&gt;6)]-beta-D-Man-(1-&gt;4)-beta-D-GlcNAc-(1-&gt;4)-beta-D-GlcNAc)-L-asparaginyl-[protein] + UDP + H(+). Its pathway is protein modification; protein glycosylation. Ethylenediaminetetraacetic acid completely abolishes catalytic activity. Catalytic activity is enhanced by complex formation with SELENOF. Its function is as follows. Recognizes glycoproteins with minor folding defects. Reglucosylates single N-glycans near the misfolded part of the protein, thus providing quality control for protein folding in the endoplasmic reticulum. Reglucosylated proteins are recognized by calreticulin for recycling to the endoplasmic reticulum and refolding or degradation. The sequence is that of UDP-glucose:glycoprotein glucosyltransferase 2 (UGGT2) from Homo sapiens (Human).